The sequence spans 141 residues: MIIGIGSDLIDITRIAKVIDRHGERFLDRIFTETEQARAGRRDKQPNLVAATYAKRFAAKEACSKALGTGIRQGVWWRDMGVVNQRGGRPTMLLTGGARARLDALTPPGMTAQIDLSITDEWPLAQAFVVISAIPAATSGT.

2 residues coordinate Mg(2+): D8 and E61.

The protein belongs to the P-Pant transferase superfamily. AcpS family. It depends on Mg(2+) as a cofactor.

It localises to the cytoplasm. It catalyses the reaction apo-[ACP] + CoA = holo-[ACP] + adenosine 3',5'-bisphosphate + H(+). Its function is as follows. Transfers the 4'-phosphopantetheine moiety from coenzyme A to a Ser of acyl-carrier-protein. In Rhodopseudomonas palustris (strain HaA2), this protein is Holo-[acyl-carrier-protein] synthase.